A 466-amino-acid polypeptide reads, in one-letter code: Cysteine--tRNA ligase 1 (466 aa).

Cys27 contacts Zn(2+). The 'HIGH' region motif lies at 29-39 (PTVQSPPHIGH). Positions 211, 236, and 240 each coordinate Zn(2+). Positions 267–271 (KMSKS) match the 'KMSKS' region motif. Lys270 provides a ligand contact to ATP.

Belongs to the class-I aminoacyl-tRNA synthetase family. As to quaternary structure, monomer. Zn(2+) serves as cofactor.

Its subcellular location is the cytoplasm. The catalysed reaction is tRNA(Cys) + L-cysteine + ATP = L-cysteinyl-tRNA(Cys) + AMP + diphosphate. This is Cysteine--tRNA ligase 1 from Tropheryma whipplei (strain TW08/27) (Whipple's bacillus).